We begin with the raw amino-acid sequence, 433 residues long: 23S rRNA (uracil(1939)-C(5))-methyltransferase RlmD (433 aa).

The TRAM domain maps to 10 to 68 (RTTTRQIITVSVNDLDSFGQGVARHNGKTLFIPGLLPQENAEVTVTEDKKQYARAKVVR). Residues Cys-81, Cys-87, Cys-90, and Cys-162 each coordinate [4Fe-4S] cluster. 6 residues coordinate S-adenosyl-L-methionine: Gln-265, Phe-294, Asn-299, Glu-315, Asn-342, and Asp-363. The Nucleophile role is filled by Cys-389.

It belongs to the class I-like SAM-binding methyltransferase superfamily. RNA M5U methyltransferase family. RlmD subfamily.

It catalyses the reaction uridine(1939) in 23S rRNA + S-adenosyl-L-methionine = 5-methyluridine(1939) in 23S rRNA + S-adenosyl-L-homocysteine + H(+). Catalyzes the formation of 5-methyl-uridine at position 1939 (m5U1939) in 23S rRNA. The chain is 23S rRNA (uracil(1939)-C(5))-methyltransferase RlmD from Escherichia coli (strain UTI89 / UPEC).